A 431-amino-acid chain; its full sequence is MGPVVERPAEPGTSSAAELELLKRRAAERIDEAAERLGALSRAIWSAPELAYEEHRAHGELTRFFECEPPAASWAVQPHFGLPTAFRAEWAPPESAAGPRALQVAFLCEYDALPALGHACGHNLIAEVGVAAALGLRAALESIAAPPPVKVIVLGTPAEEDGGGKIDLIEAGAFENLDVVFMAHPSQENAAYLPDVAEHDVTVKYYGKASHAAAYPWEGVNALDAAVLAYTNLSVLRQQMKPTWRVHGIIKNGGVKPNIIPSYSELVYYFRAPSMKELQVLTKKAEDCFRAAALATGCTVDIESEAHDYYNVIPNKTLCSAYTENGKKLGMEFISEDAVLNGPSGSTDFGNVSFVVPGIHPYFYIGTDALNHTEQYTEAAGSQAAQLYTLRTAKALAMTALDVIFKPALLEGVRKEFKCKLQEEQLLNTAA.

The protein belongs to the peptidase M20A family.

The enzyme catalyses beta-alanyl-L-lysine + H2O = beta-alanine + L-lysine. It carries out the reaction beta-alanyl-L-arginine + H2O = beta-alanine + L-arginine. The catalysed reaction is beta-alanyl-L-ornithine + H2O = beta-alanine + L-ornithine. It catalyses the reaction N(2)-(4-aminobutanoyl)-L-lysine + H2O = 4-aminobutanoate + L-lysine. The enzyme catalyses N(2)-(4-aminobutanoyl)-L-arginine + H2O = 4-aminobutanoate + L-arginine. It carries out the reaction N(2)-(4-aminobutanoyl)-L-ornithine + H2O = 4-aminobutanoate + L-ornithine. Functionally, catalyzes the peptide bond hydrolysis in dipeptides having basic amino acids lysine, ornithine or arginine at C-terminus. Postulated to function in a metabolite repair mechanism by eliminating alternate dipeptide by-products formed during carnosine synthesis. The protein is Xaa-Arg dipeptidase of Mus musculus (Mouse).